The following is a 296-amino-acid chain: NADH-cytochrome b5 reductase 2-A (296 aa).

A helical transmembrane segment spans residues 15–35; the sequence is FVIGAPTIALCSYYYSSGAFL. One can recognise an FAD-binding FR-type domain in the interval 47–151; sequence NNWIDLPISR…KGPIPKWKWV (105 aa). Residue 154–189 coordinates FAD; the sequence is SFESITLIGGGTGITPLYQLIHAITKNPNDKTKIRL.

This sequence belongs to the flavoprotein pyridine nucleotide cytochrome reductase family. It depends on FAD as a cofactor.

Its subcellular location is the mitochondrion outer membrane. It catalyses the reaction 2 Fe(III)-[cytochrome b5] + NADH = 2 Fe(II)-[cytochrome b5] + NAD(+) + H(+). In terms of biological role, may mediate the reduction of outer membrane cytochrome b5. This is NADH-cytochrome b5 reductase 2-A (MCR1A) from Vanderwaltozyma polyspora (strain ATCC 22028 / DSM 70294 / BCRC 21397 / CBS 2163 / NBRC 10782 / NRRL Y-8283 / UCD 57-17) (Kluyveromyces polysporus).